The sequence spans 344 residues: Dihydroorotate dehydrogenase (quinone) (344 aa).

FMN contacts are provided by residues 65–69 (AGLDK) and Thr89. Lys69 serves as a coordination point for substrate. Position 114–118 (114–118 (NRMGF)) interacts with substrate. 2 residues coordinate FMN: Asn142 and Asn175. Substrate is bound at residue Asn175. The active-site Nucleophile is the Ser178. Asn180 contributes to the substrate binding site. Residues Lys220 and Thr248 each coordinate FMN. 249–250 (NT) lines the substrate pocket. FMN contacts are provided by residues Gly271, Gly300, and 321-322 (YT).

This sequence belongs to the dihydroorotate dehydrogenase family. Type 2 subfamily. In terms of assembly, monomer. The cofactor is FMN.

The protein localises to the cell membrane. It catalyses the reaction (S)-dihydroorotate + a quinone = orotate + a quinol. It participates in pyrimidine metabolism; UMP biosynthesis via de novo pathway; orotate from (S)-dihydroorotate (quinone route): step 1/1. Its function is as follows. Catalyzes the conversion of dihydroorotate to orotate with quinone as electron acceptor. The sequence is that of Dihydroorotate dehydrogenase (quinone) from Paraburkholderia phymatum (strain DSM 17167 / CIP 108236 / LMG 21445 / STM815) (Burkholderia phymatum).